Reading from the N-terminus, the 1049-residue chain is MSCQKAVLELNIGSQLGPKSPERTEGVTAFEDYGTGLLENQLSVGDFVKIQKAFESPQPRKIICMSREDFTQKMTEIVGWGTKEEYGELFDKVDVAQDGFINWDKLTSFILLELYEQDERAKATVVPQWKDLEFLPVKHKDTIQKVIFLKNSSHYLTISKEGLLAIWGEHLKLQETFPITSDATKLKHLWVTSLVSLENVNKIAVAFTSKEVCFYDLLSKEEFACQYKLQGLKGTPICMDYWYDPLDANESILSFGDITGKVQAIAFTAALISLFERPASACEDGEATMTINWAELLSGCHKCCHILEHKLHQGDWVRQVTYNASLDAIISSTTSNTNSVVMAWREKSKKRLNMTSFNIAQGIHAFDYHSRLNLIATAGINNKVCLWNPYVVSKPVGVLWGHSASVIAVQFFVERKQLFSFSKDKVLRLWDIQHQLSIQRIACSFPKSQDFRCLFHFDEAHGRLFISFNNQLALLAMKSEASKRVKSHEKAVTCVLYNSILKQVISSDTGSTVSFWMIDTGQKIKQFTGCHGNAEISTMALDANETRLLTGSTDGTVKIWDFNGYCHHTLNVGQDGAVDISQILILKKKILVTGWERYDYASWKTIGRAITVFRPQNFNQFFIQPEEWKGGIQHHDDILCAAFLPPQTLVTGSYDGEIVLWNNSTENAHHVLHPDYQRLLKSKLDTKPQKLLSAGRSQPSHPMADHSTTGVRNFEIDTEGKNAVMRLCFLKARKNTAVTGGANLVSCGGSGYVRFWDIYKKQLLAEFLAHSGVGSIIMSTDKMNRYLTTGDLDGWLKIWNIEEYCLNSSKNKITKAPTLIRSFQPHEDRISSLEMCEPGGQLLIISSSADCSICVTGVCNAPVWIFGQAKHWHIENCLFLPKRDTNLVESEIQKEISLFSKEESCLDPTEHSLLNKKNKDDSTYNVRPSEDINLDIKYKERSTCMKETQKPYYGEVIKKSFSTFRSLNIGALEELPEVNKPAFLLDPEKYFRKEPEEERPQILEAPSLFKTLKAVFDEKNLFPKEILHHERKAKQLCQEKSCEVKKNKK.

Residues 81-116 form the EF-hand domain; sequence GTKEEYGELFDKVDVAQDGFINWDKLTSFILLELYE. WD repeat units lie at residues 138-177, 358-397, 401-440, 487-528, 531-570, and 633-671; these read KHKD…QETF, NIAQ…KPVG, GHSA…SIQR, SHEK…KQFT, HGNA…HHTL, and QHHD…AHHV. A disordered region spans residues 691-712; it reads LLSAGRSQPSHPMADHSTTGVR. The span at 695 to 711 shows a compositional bias: polar residues; it reads GRSQPSHPMADHSTTGV. 3 WD repeats span residues 719 to 766, 769 to 809, and 825 to 866; these read EGKN…LLAE, AHSG…LNSS, and PHED…VWIF.

The protein belongs to the CFAP337 family. In terms of assembly, associates with components of the nexin-dynein regulatory complex (N-DRC) and the CFAP184:CFAP263 complex.

The protein resides in the cell projection. Its subcellular location is the cilium. Its function is as follows. Associates with components of the nexin-dynein regulatory complex (N-DRC), a key regulator of ciliary/flagellar motility, and might act as an inner dynein arm (IDA) hub or linkage. This Homo sapiens (Human) protein is Cilia- and flagella-associated protein 337.